Here is a 123-residue protein sequence, read N- to C-terminus: Large ribosomal subunit protein uL18 (123 aa).

The protein belongs to the universal ribosomal protein uL18 family. As to quaternary structure, part of the 50S ribosomal subunit; part of the 5S rRNA/L5/L18/L25 subcomplex. Contacts the 5S and 23S rRNAs.

This is one of the proteins that bind and probably mediate the attachment of the 5S RNA into the large ribosomal subunit, where it forms part of the central protuberance. This Desulforudis audaxviator (strain MP104C) protein is Large ribosomal subunit protein uL18.